Consider the following 893-residue polypeptide: Protein FAM186B (893 aa).

Disordered stretches follow at residues 177-207 (GWQGRSPQTSPSHPQPLSPEQMLQDQHTMNT), 327-376 (QAED…PSPM), 537-557 (LEKEQESPRREPEQLGEDVER), 574-611 (LSLVPAPSRTQSAHQSRRPHLPMSPSTQQPALGKQRPM), and 806-827 (KPKKCKLPAASPRHIRPSGPTY). Composition is skewed to polar residues over residues 179 to 188 (QGRSPQTSPS) and 197 to 207 (QMLQDQHTMNT). Residues 303–331 (RYHDLLLMKQALEFQLKKAQNATGQAEDL) are a coiled coil. Residues 342–353 (SERETLPRKETV) show a composition bias toward basic and acidic residues.

Belongs to the FAM186 family.

In Homo sapiens (Human), this protein is Protein FAM186B (FAM186B).